Here is a 771-residue protein sequence, read N- to C-terminus: MKKLITDLNLNDKKVLIRLDLNVPLKGKKITSLKRIEESIPTIKYVQERGGKIILLSHLGRVKTKEDKEKKSLSIVVEALASLLNSPVKFVDQTRGKKLESAIEKLKPGDVLLIENTRFEDLNNNAESNNDPELGKYWASLGDVFINDAFGTAHRAHASNVGIASNIKESALGILVQKEVNALWKLMEQQEKPFVAILGGSKVSDKINVLEKIIDKVDRLIIGGAMAYTFLKAQGIGIGDSIYEQDKIEFATEFLKKYNHKIILPIDHALAKKFKNAKPIFNNENPLEIPQTFIGMDVGPKTIELIHKYIKGDTKLGISPAKTIFWNGPMGVTEFEEFQSGSLAVVEAISQLVGAYSVVGGGDSIAIIEKLNAQMLFSHISTGGGASLEFIESKVLPGIDAIQNYEQTYEQYDSQVQSQDFSQNFDSPLVEETFSQSTSENFSDFASSTQEHFATSENQNTLINNYENPGFDSQDMFKTEEQNDSTSSFLTSTNPFSSEFSNEFKTSDFQDLKQTQETETQETLIPHTFEYTTDDLRHTLEQYVRETSFQTRESTFPTEEASFETLEETSFQTLEESFPTQSFEQVEQTSEKNMEVSTENFENASSQTNSFTVSDIPKTTSTFEDLETPETQNTTLEEVALETSNFEAQNLETPNLQTSNFETSNLETSNFETSNFETSTFESFNTGNFSTPSSTFEDLDLQSATFQTNDESERSTQENFEPTEVIESDLLAMKTTELEQEITNNTSRDILSEDEVAAPHKKRFWFFGRKR.

The phosphoglycerate kinase stretch occupies residues 1–406 (MKKLITDLNL…PGIDAIQNYE (406 aa)). Substrate contacts are provided by residues 20–22 (DLN), arginine 35, 58–61 (HLGR), arginine 118, and arginine 155. ATP is bound by residues lysine 206, glycine 295, glutamate 334, and 361 to 364 (GGDS). Positions 407 to 771 (QTYEQYDSQV…KRFWFFGRKR (365 aa)) are unknown.

It in the N-terminal section; belongs to the phosphoglycerate kinase family. Monomer.

Its subcellular location is the cytoplasm. It carries out the reaction (2R)-3-phosphoglycerate + ATP = (2R)-3-phospho-glyceroyl phosphate + ADP. Its pathway is carbohydrate degradation; glycolysis; pyruvate from D-glyceraldehyde 3-phosphate: step 2/5. This chain is Phosphoglycerate kinase (pgk), found in Mycoplasmopsis pulmonis (strain UAB CTIP) (Mycoplasma pulmonis).